The chain runs to 780 residues: Potassium/sodium hyperpolarization-activated cyclic nucleotide-gated channel 3 (780 aa).

The interval 1–47 is disordered; the sequence is MEEEARPAVGDGEAATPARETPPAAPAQARAASGGVPESAPEPKRRQ. The Cytoplasmic segment spans residues 1 to 96; the sequence is MEEEARPAVG…PYSDFRFYWD (96 aa). The span at 13–32 shows a compositional bias: low complexity; the sequence is EAATPARETPPAAPAQARAA. Residues 45–90 are involved in subunit assembly; that stretch reads RRQLGTLLQPTVNKFSLRVFGSHKAVEIEQERVKSAGAWIIHPYSD. Residues 97–117 form a helical membrane-spanning segment; that stretch reads LIMLLLMVGNLIVLPVGITFF. Over 118–123 the chain is Extracellular; it reads KEENSP. A helical membrane pass occupies residues 124–144; the sequence is PWIVFNVLSDTFFLLDLVLNF. Residues 145 to 170 lie on the Cytoplasmic side of the membrane; sequence RTGIVVEEGAEILLAPRAIRTRYLRT. Residues 171 to 191 form a helical membrane-spanning segment; the sequence is WFLVDLISSIPVDYIFLVVEL. The Extracellular segment spans residues 192 to 200; the sequence is EPRLDAEVY. A helical; Voltage-sensor membrane pass occupies residues 201-221; that stretch reads KTARALRIVRFTKILSLLRLL. Residues 222–252 are Cytoplasmic-facing; it reads RLSRLIRYMHQWEEIFHMTYDLASAVVRIFN. A helical transmembrane segment spans residues 253-273; sequence LIGMMLLLCHWDGCLQFLVPM. At 274 to 296 the chain is on the extracellular side; that stretch reads LQDFPSDCWVSMNRMVNHSWGRQ. Asn-290 carries N-linked (GlcNAc...) asparagine glycosylation. Residues 297–318 constitute an intramembrane region (pore-forming); it reads YSHALFKAMSHMLCIGYGQQAP. Residues 319-328 are Extracellular-facing; sequence VGMPDVWLTM. A helical membrane pass occupies residues 329–349; that stretch reads LSMIVGATCYAMFIGHATALI. At 350 to 780 the chain is on the cytoplasmic side; that stretch reads QSLDSSRRQY…PRGPQISANM (431 aa). An interaction with KCTD3 region spans residues 353 to 780; it reads DSSRRQYQEK…PRGPQISANM (428 aa). Residues Gly-491, Glu-492, Cys-494, Arg-501, Thr-502, Arg-542, and Arg-545 each contribute to the 3',5'-cyclic AMP site. Residues 549-569 form a disordered region; sequence KNSILQRKRSEPSPGSSSGGV. The residue at position 634 (Ser-634) is a Phosphoserine. A compositionally biased stretch (polar residues) spans 687–698; it reads ASLSRTGRSQVS. The interval 687–780 is disordered; it reads ASLSRTGRSQ…PRGPQISANM (94 aa).

This sequence belongs to the potassium channel HCN family. As to quaternary structure, homotetramer. The potassium channel is composed of a homo- or heterotetrameric complex of pore-forming subunits. Interacts with HCN1. Interacts with KCTD3; this interaction increases cell surface expression and current density of this channel. Interacts with PEX5L.

The protein localises to the cell membrane. The enzyme catalyses K(+)(in) = K(+)(out). It carries out the reaction Na(+)(in) = Na(+)(out). Its activity is regulated as follows. Inhibited by Cs(1+) and ivabradine. Unlike HCN2 and HCN4, HCN3 is insensitive to cyclic nucleotides, such as cAMP or cGMP. This lack of sensitivity of HCN3, despite harboring a functional cyclic nucleotide-binding domain (CNBD), may be explained by its shorter C-terminal sequence, which may alter the normal autoinhibition of the channel. Phosphatidylinositol-4,5-bisphosphate (PIP(2)) shifts HCN3 activation to more depolarized potentials and accelerated activation kinetics. Hyperpolarization-activated ion channel that are permeable to sodium and potassium ions, with an about 3:1 preference for potassium ions. Contributes to the native pacemaker currents in heart (If) and in neurons (Ih). In particular, plays a pivotal role in maintaining excitability and promoting rhythmic burst firing within hypothalamic nuclei. Exerts a significant influence on the configuration of the cardiac action potential waveform. Does not appear to play a prominent role in the processing of acute, neuropathic, or inflammatory pain. The chain is Potassium/sodium hyperpolarization-activated cyclic nucleotide-gated channel 3 (Hcn3) from Rattus norvegicus (Rat).